Reading from the N-terminus, the 541-residue chain is Phosphoenolpyruvate carboxykinase (ATP) (541 aa).

Arg67, Tyr207, and Lys213 together coordinate substrate. Residues Lys213, His232, and 248 to 256 each bind ATP; that span reads GLSGTGKTT. Lys213 and His232 together coordinate Mn(2+). Asp269 serves as a coordination point for Mn(2+). ATP is bound by residues Glu297, Arg333, 449 to 450, and Thr455; that span reads RI. Arg333 serves as a coordination point for substrate.

Belongs to the phosphoenolpyruvate carboxykinase (ATP) family. In terms of assembly, monomer. Mn(2+) is required as a cofactor.

It localises to the cytoplasm. It carries out the reaction oxaloacetate + ATP = phosphoenolpyruvate + ADP + CO2. It functions in the pathway carbohydrate biosynthesis; gluconeogenesis. Its function is as follows. Involved in the gluconeogenesis. Catalyzes the conversion of oxaloacetate (OAA) to phosphoenolpyruvate (PEP) through direct phosphoryl transfer between the nucleoside triphosphate and OAA. The sequence is that of Phosphoenolpyruvate carboxykinase (ATP) from Aliivibrio salmonicida (strain LFI1238) (Vibrio salmonicida (strain LFI1238)).